We begin with the raw amino-acid sequence, 461 residues long: 26S proteasome regulatory subunit 8 (461 aa).

185 to 192 contacts ATP; sequence GPPGTGKT.

It belongs to the AAA ATPase family.

The protein resides in the cytoplasm. Its subcellular location is the nucleus. Functionally, the 26S proteasome is involved in the ATP-dependent degradation of ubiquitinated proteins. The regulatory (or ATPase) complex confers ATP dependency and substrate specificity to the 26S complex. This Xenopus laevis (African clawed frog) protein is 26S proteasome regulatory subunit 8 (psmc5).